We begin with the raw amino-acid sequence, 576 residues long: Low-affinity glucose transporter HXT4 (576 aa).

A disordered region spans residues 1-56; the sequence is MSEEAAYQEDTAVQNTPADALSPVESDSNSALSTPSNKAERDDMKDFDENHEESNN. The Cytoplasmic segment spans residues 1-66; that stretch reads MSEEAAYQED…YVEIPKKPAS (66 aa). The segment covering 25–37 has biased composition (polar residues); that stretch reads ESDSNSALSTPSN. The segment covering 38-54 has biased composition (basic and acidic residues); the sequence is KAERDDMKDFDENHEES. Residue Lys-45 forms a Glycyl lysine isopeptide (Lys-Gly) (interchain with G-Cter in ubiquitin) linkage. Residues 67–87 traverse the membrane as a helical segment; the sequence is AYVTVSICCLMVAFGGFVFGW. The Extracellular portion of the chain corresponds to 88-122; sequence DTGTISGFVAQTDFIRRFGMKHHDGTYYLSKVRTG. Residues 123-143 traverse the membrane as a helical segment; sequence LIVSIFNIGCAIGGIILAKLG. Residues 144 to 149 lie on the Cytoplasmic side of the membrane; sequence DMYGRK. The helical transmembrane segment at 150–170 threads the bilayer; that stretch reads MGLIVVVVIYIIGIIIQIASI. The Extracellular segment spans residues 171–180; that stretch reads NKWYQYFIGR. The helical transmembrane segment at 181–201 threads the bilayer; sequence IISGLGVGGIAVLSPMLISEV. Residues 202–207 lie on the Cytoplasmic side of the membrane; the sequence is SPKHIR. Residues 208 to 228 traverse the membrane as a helical segment; sequence GTLVSCYQLMITLGIFLGYCT. Residues 229 to 242 lie on the Extracellular side of the membrane; it reads NYGTKTYTNSVQWR. The helical transmembrane segment at 243–263 threads the bilayer; sequence VPLGLGFAWALFMIGGMTFVP. The Cytoplasmic portion of the chain corresponds to 264-346; that stretch reads ESPRYLVEVG…IQSLQQLTGD (83 aa). The chain crosses the membrane as a helical span at residues 347–363; it reads NYFFYYGTTVFTAVGLE. The Extracellular segment spans residues 364–369; that stretch reads DSFETS. A helical membrane pass occupies residues 370 to 387; sequence IVLGIVNFASTFVGIFLV. Residues 388–394 lie on the Cytoplasmic side of the membrane; the sequence is ERYGRRR. The helical transmembrane segment at 395–415 threads the bilayer; it reads CLLWGAASMTACMVVFASVGV. Residues 416 to 437 are Extracellular-facing; it reads TRLWPNGKKNGSSKGAGNCMIV. The N-linked (GlcNAc...) asparagine glycan is linked to Asn-425. The chain crosses the membrane as a helical span at residues 438 to 458; sequence FTCFYLFCFATTWAPIPFVVN. Residues 459 to 475 are Cytoplasmic-facing; sequence SETFPLRVKSKCMAIAQ. The chain crosses the membrane as a helical span at residues 476-496; that stretch reads ACNWIWGFLIGFFTPFISGAI. A topological domain (extracellular) is located at residue Asp-497. Residues 498–518 traverse the membrane as a helical segment; it reads FYYGYVFMGCLVFSYFYVFFF. The Cytoplasmic segment spans residues 519–576; that stretch reads VPETKGLTLEEVNTLWEEGVLPWKSPSWVPPNKRGTDYNADDLMHDDQPFYKKMFGKK.

This sequence belongs to the major facilitator superfamily. Sugar transporter (TC 2.A.1.1) family.

The protein localises to the cell membrane. Its activity is regulated as follows. Xylose uptake is strongly inhibited by glucose. Low-affinity glucose transporter. Can also transport xylose. This chain is Low-affinity glucose transporter HXT4 (HXT4), found in Saccharomyces cerevisiae (strain ATCC 204508 / S288c) (Baker's yeast).